A 250-amino-acid chain; its full sequence is Large ribosomal subunit protein uL4 (250 aa).

Disordered stretches follow at residues 1–20 and 51–101; these read MQVT…DLPR and YAGL…HGLD. Residues 92 to 101 show a composition bias toward basic and acidic residues; the sequence is PKAEKDHGLD.

It belongs to the universal ribosomal protein uL4 family. As to quaternary structure, part of the 50S ribosomal subunit.

Functionally, one of the primary rRNA binding proteins, this protein initially binds near the 5'-end of the 23S rRNA. It is important during the early stages of 50S assembly. It makes multiple contacts with different domains of the 23S rRNA in the assembled 50S subunit and ribosome. Forms part of the polypeptide exit tunnel. This is Large ribosomal subunit protein uL4 from Halobacterium salinarum (strain ATCC 29341 / DSM 671 / R1).